The following is a 295-amino-acid chain: Trimeric intracellular cation channel type 1B.1 (295 aa).

Over 1-27 (MVVPESFQLDQEILLDAGAQLHRLKMY) the chain is Lumenal. The chain crosses the membrane as a helical span at residues 28 to 45 (PYFDVAHYLLMIIEVRDD). Residues 46–56 (LGSAASIFSRK) lie on the Cytoplasmic side of the membrane. A discontinuously helical transmembrane segment spans residues 57 to 80 (HPLSCWLSSMLMCFADAFLANFLL). The Lumenal segment spans residues 81 to 89 (GEPVIAPFK). Residues 90 to 107 (RHDDIILATIIWYLVFYA) traverse the membrane as a helical segment. At 108–119 (PFDGIYKIAKIT) the chain is on the cytoplasmic side. A helical membrane pass occupies residues 120-148 (PVKCVLAVMKEVKRAYKVSHGVSHAAKLY). Positions 129 and 133 each coordinate a 1,2-diacyl-sn-glycero-3-phospho-(1D-myo-inositol-4,5-bisphosphate). At 149–150 (PN) the chain is on the lumenal side. Residues 151–177 (SYIVQVLVGTAKGAGSGIVRTLEQLVR) form a discontinuously helical membrane-spanning segment. Ser-166 is a binding site for a 1,2-diacyl-sn-glycero-3-phospho-(1D-myo-inositol-4,5-bisphosphate). The Cytoplasmic segment spans residues 178-188 (GVWLPTHNELL). A helical transmembrane segment spans residues 189 to 210 (RPSFATKACVVAASVLALEKSG). Residues 211 to 215 (TYLTA) lie on the Lumenal side of the membrane. Residues 216 to 239 (PHDLVYLVIVGFFVYFKLSAVILH) traverse the membrane as a helical segment. At 240 to 295 (VTDPFAPIENLFCAIFMGGIWDAVSRALAASRDRRAAGAHSNENGSSISTPEKKDQ) the chain is on the cytoplasmic side. Residues 274 to 295 (RAAGAHSNENGSSISTPEKKDQ) are disordered.

Belongs to the TMEM38 family. Homotrimer; trimerization probably requires binding to phosphatidylinositol 4,5-bisphosphate (PIP2).

The protein resides in the endoplasmic reticulum membrane. Its function is as follows. Potassium channel that mediates transmembrane potassium transport. Might be required for maintenance of rapid intracellular calcium release. May act as a counter-ion channel that functions in synchronization with calcium release from intracellular stores. Binds phosphatidylinositol 4,5-bisphosphate (PIP2). The protein is Trimeric intracellular cation channel type 1B.1 of Caenorhabditis elegans.